A 273-amino-acid chain; its full sequence is 4-hydroxy-tetrahydrodipicolinate reductase (273 aa).

NAD(+)-binding positions include 11 to 16 (GATGKM) and 106 to 108 (GTT). The active-site Proton donor/acceptor is the His162. A (S)-2,3,4,5-tetrahydrodipicolinate-binding site is contributed by His163. The Proton donor role is filled by Lys166. Residue 172-173 (GT) coordinates (S)-2,3,4,5-tetrahydrodipicolinate.

This sequence belongs to the DapB family.

The protein resides in the cytoplasm. The catalysed reaction is (S)-2,3,4,5-tetrahydrodipicolinate + NAD(+) + H2O = (2S,4S)-4-hydroxy-2,3,4,5-tetrahydrodipicolinate + NADH + H(+). It carries out the reaction (S)-2,3,4,5-tetrahydrodipicolinate + NADP(+) + H2O = (2S,4S)-4-hydroxy-2,3,4,5-tetrahydrodipicolinate + NADPH + H(+). Its pathway is amino-acid biosynthesis; L-lysine biosynthesis via DAP pathway; (S)-tetrahydrodipicolinate from L-aspartate: step 4/4. In terms of biological role, catalyzes the conversion of 4-hydroxy-tetrahydrodipicolinate (HTPA) to tetrahydrodipicolinate. This Synechococcus elongatus (strain ATCC 33912 / PCC 7942 / FACHB-805) (Anacystis nidulans R2) protein is 4-hydroxy-tetrahydrodipicolinate reductase.